The primary structure comprises 361 residues: MGRGGRRNPGRPRRGSLAFSPRKRASRPVPRIRSWPDEERVRVQGFAGYKAGMTHAIMIDDWPNSPTEGEEISVPVTILDAPPMYVAAIRAYAPTPDGYRCVTEAWAEIPEELEMDRVFTVPKDGEAGDLDKIEELVDEGIVEEIRVIVATQPKKAGVPKKKPDVMEYRIGGKDVRERFEYAVEILSEEIRAKDVFDEGEIVDVSAITKGKGFQGVVKRWGVTIQDRKTQRKQKGRHIGSIGPITPSRVRWTVPMAGQVGYHQRTEHNKRILKIGEDGEEVTPRGGFVNYGVVRGDYIMIHGTVPGPKKRLIRVRPAVRPPKNAPEGAPEILYISRTSQQGVRPKASEDEIVEQLGGPASA.

A compositionally biased stretch (basic residues) spans 1–14; that stretch reads MGRGGRRNPGRPRR. 2 disordered regions span residues 1 to 33 and 337 to 361; these read MGRG…PRIR and TSQQ…PASA.

The protein belongs to the universal ribosomal protein uL3 family. As to quaternary structure, part of the 50S ribosomal subunit. Forms a cluster with proteins L14 and L24e.

Functionally, one of the primary rRNA binding proteins, it binds directly near the 3'-end of the 23S rRNA, where it nucleates assembly of the 50S subunit. The protein is Large ribosomal subunit protein uL3 of Methanopyrus kandleri (strain AV19 / DSM 6324 / JCM 9639 / NBRC 100938).